We begin with the raw amino-acid sequence, 1407 residues long: DNA-directed RNA polymerase subunit beta' (1407 aa).

Zn(2+) is bound by residues Cys70, Cys72, Cys85, and Cys88. The Mg(2+) site is built by Asp460, Asp462, and Asp464. 4 residues coordinate Zn(2+): Cys814, Cys888, Cys895, and Cys898.

Belongs to the RNA polymerase beta' chain family. In terms of assembly, the RNAP catalytic core consists of 2 alpha, 1 beta, 1 beta' and 1 omega subunit. When a sigma factor is associated with the core the holoenzyme is formed, which can initiate transcription. Requires Mg(2+) as cofactor. Zn(2+) serves as cofactor.

The enzyme catalyses RNA(n) + a ribonucleoside 5'-triphosphate = RNA(n+1) + diphosphate. Its function is as follows. DNA-dependent RNA polymerase catalyzes the transcription of DNA into RNA using the four ribonucleoside triphosphates as substrates. The sequence is that of DNA-directed RNA polymerase subunit beta' from Salmonella paratyphi B (strain ATCC BAA-1250 / SPB7).